A 280-amino-acid polypeptide reads, in one-letter code: MRINGETKLTGIIGYPLKHTLSPQMHNEAFKALNLNFLYLPLEVAEESLPQAIYGLKAFNFRGINVTIPYKEKVFPFLDEVATEAKTIGAVNTIVHDRGRLIGYNTDAPGFLLSLKENDVEVTGKKVLLLGAGGAARAVAYALLTAGAELIIANRTIDKAKELAKDFQGVGKISEILELGDKPISLAPYHMAVNTLPLGMHPYENQMPAVDFTGVTSDFVAYDLIYNPAETKFLKASKEKGARTINGLSMLLWQGVLAFEKWTGVSPPVKVMKKAIGLSC.

Shikimate-binding positions include Thr20–Ser22 and Thr67. Catalysis depends on Lys71, which acts as the Proton acceptor. The shikimate site is built by Asn92 and Asp107. Residues Gly131–Ala135, Asn154–Lys159, and Leu224 contribute to the NADP(+) site. Residue Tyr226 participates in shikimate binding. Gly247 is an NADP(+) binding site.

This sequence belongs to the shikimate dehydrogenase family. As to quaternary structure, homodimer.

It catalyses the reaction shikimate + NADP(+) = 3-dehydroshikimate + NADPH + H(+). It participates in metabolic intermediate biosynthesis; chorismate biosynthesis; chorismate from D-erythrose 4-phosphate and phosphoenolpyruvate: step 4/7. Involved in the biosynthesis of the chorismate, which leads to the biosynthesis of aromatic amino acids. Catalyzes the reversible NADPH linked reduction of 3-dehydroshikimate (DHSA) to yield shikimate (SA). The sequence is that of Shikimate dehydrogenase (NADP(+)) from Carboxydothermus hydrogenoformans (strain ATCC BAA-161 / DSM 6008 / Z-2901).